A 692-amino-acid polypeptide reads, in one-letter code: Elongation factor G (692 aa).

A tr-type G domain is found at 8–282; the sequence is ENTRNIGIMA…AVIDYLPSPL (275 aa). Residues 17–24, 81–85, and 135–138 each bind GTP; these read AHIDAGKT, DTPGH, and NKMD.

Belongs to the TRAFAC class translation factor GTPase superfamily. Classic translation factor GTPase family. EF-G/EF-2 subfamily.

The protein localises to the cytoplasm. Its function is as follows. Catalyzes the GTP-dependent ribosomal translocation step during translation elongation. During this step, the ribosome changes from the pre-translocational (PRE) to the post-translocational (POST) state as the newly formed A-site-bound peptidyl-tRNA and P-site-bound deacylated tRNA move to the P and E sites, respectively. Catalyzes the coordinated movement of the two tRNA molecules, the mRNA and conformational changes in the ribosome. This chain is Elongation factor G, found in Bacillus cereus (strain Q1).